The following is a 502-amino-acid chain: Mannitol 2-dehydrogenase (502 aa).

NAD(+) is bound at residue 37 to 48 (IVHIGVGGFHRA).

Belongs to the mannitol dehydrogenase family. As to quaternary structure, monomer.

It carries out the reaction D-mannitol + NAD(+) = D-fructose + NADH + H(+). Catalyzes the NAD(H)-dependent interconversion of D-fructose and D-mannitol in the mannitol metabolic pathway. The protein is Mannitol 2-dehydrogenase of Aspergillus clavatus (strain ATCC 1007 / CBS 513.65 / DSM 816 / NCTC 3887 / NRRL 1 / QM 1276 / 107).